Reading from the N-terminus, the 617-residue chain is 1-deoxy-D-xylulose-5-phosphate synthase (617 aa).

Thiamine diphosphate contacts are provided by residues histidine 76 and 117–119; that span reads GHS. Residue aspartate 148 coordinates Mg(2+). Residues 149–150, asparagine 177, tyrosine 285, and glutamate 366 each bind thiamine diphosphate; that span reads GA. Residue asparagine 177 participates in Mg(2+) binding.

Belongs to the transketolase family. DXPS subfamily. In terms of assembly, homodimer. It depends on Mg(2+) as a cofactor. Requires thiamine diphosphate as cofactor.

The catalysed reaction is D-glyceraldehyde 3-phosphate + pyruvate + H(+) = 1-deoxy-D-xylulose 5-phosphate + CO2. It functions in the pathway metabolic intermediate biosynthesis; 1-deoxy-D-xylulose 5-phosphate biosynthesis; 1-deoxy-D-xylulose 5-phosphate from D-glyceraldehyde 3-phosphate and pyruvate: step 1/1. Its function is as follows. Catalyzes the acyloin condensation reaction between C atoms 2 and 3 of pyruvate and glyceraldehyde 3-phosphate to yield 1-deoxy-D-xylulose-5-phosphate (DXP). The chain is 1-deoxy-D-xylulose-5-phosphate synthase from Histophilus somni (strain 129Pt) (Haemophilus somnus).